The chain runs to 608 residues: 1-deoxy-D-xylulose-5-phosphate synthase (608 aa).

Thiamine diphosphate is bound by residues H66 and 107-109 (GHA). Position 138 (D138) interacts with Mg(2+). Residues 139–140 (GA), N167, F277, and E350 each bind thiamine diphosphate. A Mg(2+)-binding site is contributed by N167.

The protein belongs to the transketolase family. DXPS subfamily. Homodimer. Mg(2+) is required as a cofactor. Requires thiamine diphosphate as cofactor.

The enzyme catalyses D-glyceraldehyde 3-phosphate + pyruvate + H(+) = 1-deoxy-D-xylulose 5-phosphate + CO2. It functions in the pathway metabolic intermediate biosynthesis; 1-deoxy-D-xylulose 5-phosphate biosynthesis; 1-deoxy-D-xylulose 5-phosphate from D-glyceraldehyde 3-phosphate and pyruvate: step 1/1. In terms of biological role, catalyzes the acyloin condensation reaction between C atoms 2 and 3 of pyruvate and glyceraldehyde 3-phosphate to yield 1-deoxy-D-xylulose-5-phosphate (DXP). The protein is 1-deoxy-D-xylulose-5-phosphate synthase of Thermotoga maritima (strain ATCC 43589 / DSM 3109 / JCM 10099 / NBRC 100826 / MSB8).